The following is a 160-amino-acid chain: Small ribosomal subunit protein uS7 (160 aa).

The protein belongs to the universal ribosomal protein uS7 family. In terms of assembly, part of the 30S ribosomal subunit. Contacts proteins S9 and S11.

In terms of biological role, one of the primary rRNA binding proteins, it binds directly to 16S rRNA where it nucleates assembly of the head domain of the 30S subunit. Is located at the subunit interface close to the decoding center, probably blocks exit of the E-site tRNA. The chain is Small ribosomal subunit protein uS7 from Anaplasma marginale (strain Florida).